The sequence spans 463 residues: Ribosomal protein uS12 methylthiotransferase RimO (463 aa).

The MTTase N-terminal domain occupies 15 to 130 (PKVGFVSLGC…VMQAVHSHLP (116 aa)). [4Fe-4S] cluster contacts are provided by Cys24, Cys60, Cys89, Cys161, Cys165, and Cys168. One can recognise a Radical SAM core domain in the interval 147–392 (LTPRHYAYLK…MEVAEQVSAK (246 aa)). A TRAM domain is found at 395–463 (ARKVGKTLKV…ADGHDLWGEV (69 aa)).

The protein belongs to the methylthiotransferase family. RimO subfamily. [4Fe-4S] cluster serves as cofactor.

The protein resides in the cytoplasm. It catalyses the reaction L-aspartate(89)-[ribosomal protein uS12]-hydrogen + (sulfur carrier)-SH + AH2 + 2 S-adenosyl-L-methionine = 3-methylsulfanyl-L-aspartate(89)-[ribosomal protein uS12]-hydrogen + (sulfur carrier)-H + 5'-deoxyadenosine + L-methionine + A + S-adenosyl-L-homocysteine + 2 H(+). Functionally, catalyzes the methylthiolation of an aspartic acid residue of ribosomal protein uS12. In Paraburkholderia phymatum (strain DSM 17167 / CIP 108236 / LMG 21445 / STM815) (Burkholderia phymatum), this protein is Ribosomal protein uS12 methylthiotransferase RimO.